Reading from the N-terminus, the 1396-residue chain is Melanoma inhibitory activity protein 2 (1396 aa).

The signal sequence occupies residues 1–22; sequence MAEVSVQRILLLVVSLAKCLEG. At 23–604 the chain is on the lumenal side; the sequence is TKLLAHLKKC…YGFMSSALSP (582 aa). Residues 39-101 enclose the SH3 domain; sequence TLISRVLALR…PRDAVEIEEV (63 aa). N-linked (GlcNAc...) asparagine glycosylation occurs at N59. 2 disordered regions span residues 197 to 288 and 331 to 361; these read EGAG…VPDE and ESNPPLQDIPSSVPPDEEVPAPCREISTDKE. Acidic residues predominate over residues 243-258; sequence SDTEPTQELALEEESD. A glycan (N-linked (GlcNAc...) asparagine) is linked at N366. 2 disordered regions span residues 396-421 and 525-557; these read DKGENEDGEVDNLKHPIGSDFDPEKE and PMEEHEGVHFKPSSSKRNEDDSNSWADPEELSV. Residues 605–625 lie within the membrane without spanning it; it reads IEILLESVVAALPEDMRADFN. The Lumenal segment spans residues 626–628; the sequence is PSG. A helical membrane pass occupies residues 629–649; sequence FSLELAVCVLSVGLLAVVLFL. The Cytoplasmic segment spans residues 650 to 1396; the sequence is WRGFRSIRSR…AADPPETQEA (747 aa). Positions 651–1243 are mediates interaction with MIA3; sequence RGFRSIRSRF…RSYNMPSLDK (593 aa). 2 coiled-coil regions span residues 693–867 and 914–1082; these read YEGL…LVTS and AAKL…NRQK. The disordered stretch occupies residues 1103–1396; that stretch reads PNTAFGREHS…AADPPETQEA (294 aa). The tract at residues 1105 to 1396 is proline-rich domain (PRD); probably mediates interaction with COPII coat subunits; sequence TAFGREHSPY…AADPPETQEA (292 aa). Over residues 1135 to 1146 the composition is skewed to low complexity; sequence LLEGPLRLSPLL. Positions 1165–1179 are enriched in basic and acidic residues; the sequence is MNTERGESSYDRLSD. Residues 1252–1269 are compositionally biased toward polar residues; that stretch reads MESSGNGTKDNLGNSNVP. Pro residues-rich tracts occupy residues 1331–1342 and 1351–1368; these read RDFPGPPLPPFP and GFPPYLPPRAGFFPPPPH.

Belongs to the MIA/OTOR family. As to quaternary structure, interacts with MIA3. Interacts with the COPII coat subunits SEC23A, SEC23B and maybe SEC24C. Interacts with PREB; recruits PREB to endoplasmic reticulum exit sites. Interacts with APOB. As to expression, isoform 1 is expressed in liver (at protein level). Isoform 2 is highly expressed in liver and weakly in testis.

Its subcellular location is the endoplasmic reticulum membrane. Its function is as follows. Plays a role in the transport of cargos that are too large to fit into COPII-coated vesicles and require specific mechanisms to be incorporated into membrane-bound carriers and exported from the endoplasmic reticulum. Plays a role in the secretion of lipoproteins, pre-chylomicrons and pre-VLDLs, by participating in their export from the endoplasmic reticulum. Thereby, may play a role in cholesterol and triglyceride homeostasis. Required for collagen VII (COL7A1) secretion by loading COL7A1 into transport carriers and recruiting PREB/SEC12 at the endoplasmic reticulum exit sites. The sequence is that of Melanoma inhibitory activity protein 2 from Mus musculus (Mouse).